The sequence spans 53 residues: Small ribosomal subunit protein uS14 (53 aa).

The Zn(2+) site is built by cysteine 18, cysteine 21, cysteine 36, and cysteine 39.

Belongs to the universal ribosomal protein uS14 family. Zinc-binding uS14 subfamily. Part of the 30S ribosomal subunit. It depends on Zn(2+) as a cofactor.

Functionally, binds 16S rRNA, required for the assembly of 30S particles. The polypeptide is Small ribosomal subunit protein uS14 (Thermoplasma volcanium (strain ATCC 51530 / DSM 4299 / JCM 9571 / NBRC 15438 / GSS1)).